Here is a 96-residue protein sequence, read N- to C-terminus: Small ribosomal subunit protein bS6 (96 aa).

Belongs to the bacterial ribosomal protein bS6 family.

Binds together with bS18 to 16S ribosomal RNA. The sequence is that of Small ribosomal subunit protein bS6 from Nocardioides sp. (strain ATCC BAA-499 / JS614).